Consider the following 242-residue polypeptide: MDELYSVRMRAAQGGPHENGGHHISGAERIVTLNQVGFIAQSLAERALHHSKGTADFINITVDLIPSETITYIDCLKVKEHTANTVTEAHQLAVKLLQGTDISESAIRNSIFLLKSLVSSMRGAMLVDAISGERLDAGNRGVRVSHMDSFDSDKLGDNEHMREALVLASKVQSAEGIVGELCWSDDPDYTIGYVACNGVYHRIPNMKEIGSNLGGRVFFVKPNIDLEGVIEYLEKEPVLVQW.

Belongs to the BioW family. In terms of assembly, homodimer. Mg(2+) is required as a cofactor.

It catalyses the reaction heptanedioate + ATP + CoA = 6-carboxyhexanoyl-CoA + AMP + diphosphate. Its pathway is metabolic intermediate metabolism; pimeloyl-CoA biosynthesis; pimeloyl-CoA from pimelate: step 1/1. Functionally, catalyzes the transformation of pimelate into pimeloyl-CoA with concomitant hydrolysis of ATP to AMP. This Veillonella parvula (strain ATCC 10790 / DSM 2008 / CCUG 5123 / JCM 12972 / NCTC 11810 / Te3) (Veillonella alcalescens) protein is 6-carboxyhexanoate--CoA ligase.